A 318-amino-acid polypeptide reads, in one-letter code: Pantothenate kinase (318 aa).

96–103 (GSVAVGKS) contacts ATP.

Belongs to the prokaryotic pantothenate kinase family.

It localises to the cytoplasm. The catalysed reaction is (R)-pantothenate + ATP = (R)-4'-phosphopantothenate + ADP + H(+). Its pathway is cofactor biosynthesis; coenzyme A biosynthesis; CoA from (R)-pantothenate: step 1/5. In Rhodopseudomonas palustris (strain HaA2), this protein is Pantothenate kinase.